Consider the following 312-residue polypeptide: Bifunctional pinoresinol-lariciresinol reductase (312 aa).

NADP(+) is bound by residues 10-16, arginine 35, and lysine 44; that span reads GGTGYLG. The Proton acceptor role is filled by lysine 139. Arginine 143 contributes to the NADP(+) binding site. Residue histidine 271 coordinates substrate.

The protein belongs to the NmrA-type oxidoreductase family. Isoflavone reductase subfamily. Dimer. As to expression, expressed in young stems, young roots and petioles. In stems, expressed in radial parenchyma cells and in the cambial cells of developing secondary xylem.

The enzyme catalyses (+)-lariciresinol + NADP(+) = (+)-pinoresinol + NADPH + H(+). The catalysed reaction is (-)-secoisolariciresinol + NADP(+) = (+)-lariciresinol + NADPH + H(+). Reductase involved in lignan biosynthesis. Catalyzes the enantioselective sequential conversion of (+)-pinoresinol into (+)-lariciresinol and of (+)-lariciresinol into (-)-secoisolariciresinol. Abstracts the 4R-hydride from the NADPH cofactor during catalysis. The sequence is that of Bifunctional pinoresinol-lariciresinol reductase (PLR_Fi1) from Forsythia intermedia (Border forsythia).